The primary structure comprises 307 residues: Nicotinamide/nicotinic acid mononucleotide adenylyltransferase 2 (307 aa).

S16 and F17 together coordinate NAD(+). H24 contributes to the ATP binding site. NAD(+) contacts are provided by W92 and T95. 2 S-palmitoyl cysteine lipidation sites follow: C164 and C165. Residues G200, D202, L212, W213, and R232 each contribute to the NAD(+) site. 271–274 (TKSR) serves as a coordination point for ATP.

This sequence belongs to the eukaryotic NMN adenylyltransferase family. As to quaternary structure, monomer. Requires Mg(2+) as cofactor. Degraded in response to injured neurite. Degradation is caused by polyubiquitination by MYCBP2 after recognition by FBXO45. Post-translationally, palmitoylated; palmitoylation is required for membrane association.

It is found in the golgi apparatus membrane. Its subcellular location is the cytoplasmic vesicle membrane. The protein resides in the cytoplasm. The protein localises to the cell projection. It localises to the axon. It carries out the reaction beta-nicotinamide D-ribonucleotide + ATP + H(+) = diphosphate + NAD(+). It catalyses the reaction nicotinate beta-D-ribonucleotide + ATP + H(+) = deamido-NAD(+) + diphosphate. It functions in the pathway cofactor biosynthesis; NAD(+) biosynthesis; NAD(+) from nicotinamide D-ribonucleotide: step 1/1. Its pathway is cofactor biosynthesis; NAD(+) biosynthesis; deamido-NAD(+) from nicotinate D-ribonucleotide: step 1/1. Inhibited by P1-(adenosine-5')-P3-(nicotinamide-riboside-5')-triphosphate (Np3AD) and P1-(adenosine-5')-P4-(nicotinamide-riboside-5')-tetraphosphate (Np4AD). Functionally, nicotinamide/nicotinate-nucleotide adenylyltransferase that acts as an axon maintenance factor. Axon survival factor required for the maintenance of healthy axons: acts by delaying Wallerian axon degeneration, an evolutionarily conserved process that drives the loss of damaged axons. Catalyzes the formation of NAD(+) from nicotinamide mononucleotide (NMN) and ATP. Can also use the deamidated form; nicotinic acid mononucleotide (NaMN) as substrate but with a lower efficiency. Cannot use triazofurin monophosphate (TrMP) as substrate. Also catalyzes the reverse reaction, i.e. the pyrophosphorolytic cleavage of NAD(+). For the pyrophosphorolytic activity prefers NAD(+), NADH and NaAD as substrates and degrades nicotinic acid adenine dinucleotide phosphate (NHD) less effectively. Fails to cleave phosphorylated dinucleotides NADP(+), NADPH and NaADP(+). Also acts as an activator of ADP-ribosylation by supporting the catalytic activity of PARP16 and promoting mono-ADP-ribosylation of ribosomes by PARP16. May be involved in the maintenance of axonal integrity. This Rattus norvegicus (Rat) protein is Nicotinamide/nicotinic acid mononucleotide adenylyltransferase 2 (Nmnat2).